Here is a 963-residue protein sequence, read N- to C-terminus: Copalyl diphosphate synthase (963 aa).

A type II terpene cyclase (TC) region spans residues 1-539 (MSPMDLQESA…EAYILAALKR (539 aa)). Residues 227–292 (ATQWDDECED…FIEKIRSYLH (66 aa)) are substrate binding. Residues aspartate 311 and aspartate 314 each coordinate Mg(2+). The short motif at 311–314 (DADD) is the DXDD element. Residues 333–341 (AMLKEFEEE) carry the NSE/DTE motif. Substrate is bound by residues 337–341 (EFEEE) and 521–522 (VT). A linker region spans residues 540–659 (AADLPDENAE…SVSVHTDHSD (120 aa)). Residues 627 to 648 (TNGHYVNGTNHETPLTNGISNG) are compositionally biased toward polar residues. A disordered region spans residues 627–657 (TNGHYVNGTNHETPLTNGISNGDSVSVHTDH). Residues 660 to 963 (SYYQRSDWTA…KILARMSLEL (304 aa)) form a geranylfarnesyl diphosphate synthase (PT) region. Residues lysine 688, arginine 691, and histidine 720 each coordinate isopentenyl diphosphate. Mg(2+) is bound by residues aspartate 727 and aspartate 731. The DDXXD 1 motif lies at 727–731 (DDIQD). Dimethylallyl diphosphate is bound at residue arginine 736. Arginine 737 is an isopentenyl diphosphate binding site. Residues lysine 814, threonine 815, glutamine 848, asparagine 855, lysine 865, and lysine 875 each contribute to the dimethylallyl diphosphate site. A DDXXD 2 motif is present at residues 851–855 (DDYLN).

It in the N-terminal section; belongs to the terpene synthase family. This sequence in the C-terminal section; belongs to the FPP/GGPP synthase family. Homohexamer. The cofactor is Mg(2+).

The enzyme catalyses isopentenyl diphosphate + (2E,6E)-farnesyl diphosphate = (2E,6E,10E)-geranylgeranyl diphosphate + diphosphate. It catalyses the reaction (2E,6E,10E)-geranylgeranyl diphosphate = (+)-copalyl diphosphate. In terms of biological role, bifunctional terpene synthase that possesses both prenyltransferase and type II terpene cyclase activity, converting isopentenyl diphosphate (IPP) and dimethylallyl diphosphate (DMAPP) into geranylgeranyl diphosphate (GGPP) and further converting GGPP into copalyl diphosphate, respectively. This chain is Copalyl diphosphate synthase, found in Talaromyces verruculosus (Penicillium verruculosum).